The sequence spans 126 residues: Probable V-type proton ATPase subunit G (126 aa).

This sequence belongs to the V-ATPase G subunit family. As to quaternary structure, V-ATPase is a heteromultimeric enzyme made up of two complexes: the ATP-hydrolytic V1 complex and the proton translocation V0 complex. The V1 complex consists of three catalytic AB heterodimers that form a heterohexamer, three peripheral stalks each consisting of EG heterodimers, one central rotor including subunits D and F, and the regulatory subunits C and H. The proton translocation complex V0 consists of the proton transport subunit a, a ring of proteolipid subunits c9c'', rotary subunit d, subunits e and f, and the accessory subunits vah-19/Ac45 and vah-20/PRR. Interacts with ced-1.

Subunit of the V1 complex of vacuolar(H+)-ATPase (V-ATPase), a multisubunit enzyme composed of a peripheral complex (V1) that hydrolyzes ATP and a membrane integral complex (V0) that translocates protons. V-ATPase is responsible for acidifying and maintaining the pH of intracellular compartments and in some cell types, is targeted to the plasma membrane, where it is responsible for acidifying the extracellular environment. In neurons, required for necrotic cell death by promoting intracellular acidification. In Caenorhabditis elegans, this protein is Probable V-type proton ATPase subunit G.